A 274-amino-acid polypeptide reads, in one-letter code: Ribosomal RNA small subunit methyltransferase A (274 aa).

Residues N28, L30, G55, E77, D103, and N122 each contribute to the S-adenosyl-L-methionine site.

This sequence belongs to the class I-like SAM-binding methyltransferase superfamily. rRNA adenine N(6)-methyltransferase family. RsmA subfamily.

The protein resides in the cytoplasm. It catalyses the reaction adenosine(1518)/adenosine(1519) in 16S rRNA + 4 S-adenosyl-L-methionine = N(6)-dimethyladenosine(1518)/N(6)-dimethyladenosine(1519) in 16S rRNA + 4 S-adenosyl-L-homocysteine + 4 H(+). Specifically dimethylates two adjacent adenosines (A1518 and A1519) in the loop of a conserved hairpin near the 3'-end of 16S rRNA in the 30S particle. May play a critical role in biogenesis of 30S subunits. The polypeptide is Ribosomal RNA small subunit methyltransferase A (Rhizobium meliloti (strain 1021) (Ensifer meliloti)).